The primary structure comprises 215 residues: Deoxyribose-phosphate aldolase (215 aa).

Asp90 functions as the Proton donor/acceptor in the catalytic mechanism. Lys152 serves as the catalytic Schiff-base intermediate with acetaldehyde. The Proton donor/acceptor role is filled by Lys181.

The protein belongs to the DeoC/FbaB aldolase family. DeoC type 1 subfamily.

It is found in the cytoplasm. It catalyses the reaction 2-deoxy-D-ribose 5-phosphate = D-glyceraldehyde 3-phosphate + acetaldehyde. It functions in the pathway carbohydrate degradation; 2-deoxy-D-ribose 1-phosphate degradation; D-glyceraldehyde 3-phosphate and acetaldehyde from 2-deoxy-alpha-D-ribose 1-phosphate: step 2/2. Catalyzes a reversible aldol reaction between acetaldehyde and D-glyceraldehyde 3-phosphate to generate 2-deoxy-D-ribose 5-phosphate. The polypeptide is Deoxyribose-phosphate aldolase (Ureaplasma parvum serovar 3 (strain ATCC 27815 / 27 / NCTC 11736)).